The primary structure comprises 359 residues: Protein PAM71-homolog, chloroplastic (359 aa).

The transit peptide at 1–66 directs the protein to the chloroplast; sequence MKLTSLSKNA…DLLWGKFRVR (66 aa). A disordered region spans residues 71–102; the sequence is GVGSGSYSGGEEDGSQSSSLDQSPATSSESLK. The span at 85-98 shows a compositional bias: low complexity; the sequence is SQSSSLDQSPATSS. A run of 7 helical transmembrane segments spans residues 110–130, 149–169, 177–197, 207–227, 269–289, 311–331, and 339–359; these read SLSI…ITFV, AFSL…AALL, LVLL…VVIG, FQTT…FFGL, LTNP…AEWG, GAIA…AFLA, and VGYV…FGVF.

Belongs to the GDT1 family.

The protein localises to the plastid. Its subcellular location is the chloroplast membrane. Probable chloroplast-localized Mn(2+)/H(+) and/or Ca(2+)/H(+) antiporter regulating Ca(2+), Mn(2+) and pH homeostasis. In Arabidopsis thaliana (Mouse-ear cress), this protein is Protein PAM71-homolog, chloroplastic.